Consider the following 286-residue polypeptide: Pyridoxal kinase PdxY (286 aa).

Residues Ser-9 and 44 to 45 (TQ) contribute to the substrate site. ATP contacts are provided by residues Asp-111, Ala-143, Glu-148, Lys-181, and 208-211 (RPLV). Asp-223 lines the substrate pocket.

This sequence belongs to the pyridoxine kinase family. PdxY subfamily. In terms of assembly, homodimer. It depends on Mg(2+) as a cofactor.

It catalyses the reaction pyridoxal + ATP = pyridoxal 5'-phosphate + ADP + H(+). It functions in the pathway cofactor metabolism; pyridoxal 5'-phosphate salvage; pyridoxal 5'-phosphate from pyridoxal: step 1/1. In terms of biological role, pyridoxal kinase involved in the salvage pathway of pyridoxal 5'-phosphate (PLP). Catalyzes the phosphorylation of pyridoxal to PLP. This chain is Pyridoxal kinase PdxY, found in Salmonella paratyphi A (strain ATCC 9150 / SARB42).